The chain runs to 171 residues: Adenine phosphoribosyltransferase (171 aa).

It belongs to the purine/pyrimidine phosphoribosyltransferase family. As to quaternary structure, homodimer.

It is found in the cytoplasm. It catalyses the reaction AMP + diphosphate = 5-phospho-alpha-D-ribose 1-diphosphate + adenine. It participates in purine metabolism; AMP biosynthesis via salvage pathway; AMP from adenine: step 1/1. In terms of biological role, catalyzes a salvage reaction resulting in the formation of AMP, that is energically less costly than de novo synthesis. The polypeptide is Adenine phosphoribosyltransferase (Nitrosococcus oceani (strain ATCC 19707 / BCRC 17464 / JCM 30415 / NCIMB 11848 / C-107)).